Consider the following 1822-residue polypeptide: CDK5 regulatory subunit-associated protein 2 (1822 aa).

A CM1 motif; interacts with the gTuRC region spans residues 50–93 (KVSPTRARNMKDFENQITELKKENFNLKLRIYFLEERIQQEFAG). The tract at residues 57–195 (RNMKDFENQI…TEKALRLSLE (139 aa)) is interaction with NCKAP5L. 2 positions are modified to phosphoserine: S485 and S544. Positions 1022 to 1046 (FQDNPGEQEGPETTQSAGRDKDMDS) are disordered. T1195 carries the post-translational modification Phosphothreonine. Residues 1201 to 1822 (GKMLESLKQQ…GASSPSRPGS (622 aa)) form an interaction with PCNT and AKAP9 region. Phosphoserine occurs at positions 1243 and 1245. The disordered stretch occupies residues 1350–1391 (YHHLLPESPEPSASHALSDDEMSEKSFLSRDPKPDSDTEKYP). Residues 1372–1389 (SEKSFLSRDPKPDSDTEK) show a composition bias toward basic and acidic residues. A phosphoserine mark is found at S1497, S1592, and S1595. The segment at 1655-1697 (HMLGLIEDYDALYKQISWGQTLLAKMDVQTQEALSPTSHKLGP) is interaction with CDK5R1. The tract at residues 1655–1822 (HMLGLIEDYD…GASSPSRPGS (168 aa)) is required for centrosomal attachment, Golgi targeting and CALM1 interaction. Positions 1688–1822 (LSPTSHKLGP…GASSPSRPGS (135 aa)) are interaction with PCNT. Residues 1790 to 1799 (VITHQVLRKA) form a required for centrosomal attachment, Golgi localization and CALM1 interaction region. Phosphoserine is present on S1822.

In terms of assembly, homodimer. Interacts with CDK5R1 (p35 form). CDK5RAP1, CDK5RAP2 and CDK5RAP3 show competitive binding to CDK5R1. May form a complex with CDK5R1 and CDK5. Interacts with pericentrin/PCNT; the interaction is leading to centrosomal and Golgi localization of CDK5RAP2 and PCNT. Interacts with AKAP9; the interaction targets CDK5RAP2 and AKAP9 to Golgi apparatus. Interacts with TUBG1; the interaction is leading to the centrosomal localization of CDK5RAP2 and TUBG1. Interacts with TUBGCP3. Interacts with CALM1. Interacts with CDC20. Interacts with CEP68; degradation of CEP68 in early mitosis leads to removal of CDK5RAP2 from the centrosome which promotes centriole disengagement and subsequent centriole separation. Interacts with NCKAP5L. Interacts with LGALS3BP; this interaction may connect the pericentrosomal complex to the gamma-tubulin ring complex (gTuRC) to promote microtubule assembly and acetylation. Contrary to human, chimpanzee, bovine and dog orthologous proteins, does not interact with EB1/MAPRE1, possibly due to a divergence at the level of the critical residue 939, which is a proline in MAPRE1-binding orthologs and a leucine in mouse and rat. Interacts with CCDC66. Associates (via CM1 motif) with TUBGCP2 of the gTuRC; the interaction plays a role in gTuRC activation. In terms of processing, phosphorylated in vitro by CDK5. In terms of tissue distribution, expressed in testis, thymus, heart and brain.

It localises to the cytoplasm. It is found in the cytoskeleton. Its subcellular location is the microtubule organizing center. The protein localises to the centrosome. The protein resides in the golgi apparatus. Its function is as follows. Potential regulator of CDK5 activity via its interaction with CDK5R1. Negative regulator of centriole disengagement (licensing) which maintains centriole engagement and cohesion. Involved in regulation of mitotic spindle orientation. Plays a role in the spindle checkpoint activation by acting as a transcriptional regulator of both BUBR1 and MAD2 promoter. Together with EB1/MAPRE1, may promote microtubule polymerization, bundle formation, growth and dynamics at the plus ends. Regulates centrosomal maturation by recruitment of the gamma-tubulin ring complex (gTuRC) onto centrosomes. Required for the recruitment of AKAP9 to centrosomes. Plays a role in neurogenesis. Contrary to higher mammalian orthologs, including human, chimpanzee, bovine and dog, does not interact with EB1/MAPRE1, therefore its function in the regulation of microtubule dynamics is unclear. This chain is CDK5 regulatory subunit-associated protein 2 (Cdk5rap2), found in Mus musculus (Mouse).